The chain runs to 205 residues: Large ribosomal subunit protein uL13 (205 aa).

Belongs to the universal ribosomal protein uL13 family.

This is Large ribosomal subunit protein uL13 (RpL13A) from Drosophila melanogaster (Fruit fly).